The following is a 504-amino-acid chain: Glutamate--tRNA ligase (504 aa).

Positions 9-19 (PSPTGDPHVGT) match the 'HIGH' region motif. The 'KMSKS' region signature appears at 248 to 252 (KISKR). Position 251 (Lys251) interacts with ATP.

Belongs to the class-I aminoacyl-tRNA synthetase family. Glutamate--tRNA ligase type 1 subfamily. Monomer.

Its subcellular location is the cytoplasm. The enzyme catalyses tRNA(Glu) + L-glutamate + ATP = L-glutamyl-tRNA(Glu) + AMP + diphosphate. Its function is as follows. Catalyzes the attachment of glutamate to tRNA(Glu) in a two-step reaction: glutamate is first activated by ATP to form Glu-AMP and then transferred to the acceptor end of tRNA(Glu). This Acidothermus cellulolyticus (strain ATCC 43068 / DSM 8971 / 11B) protein is Glutamate--tRNA ligase.